Consider the following 197-residue polypeptide: Ribonuclease HII (197 aa).

In terms of domain architecture, RNase H type-2 spans 9 to 197 (ELIAGVDEVG…APVKKALEQF (189 aa)). Asp15, Glu16, and Asp107 together coordinate a divalent metal cation.

This sequence belongs to the RNase HII family. Mn(2+) is required as a cofactor. Mg(2+) serves as cofactor.

The protein resides in the cytoplasm. It carries out the reaction Endonucleolytic cleavage to 5'-phosphomonoester.. In terms of biological role, endonuclease that specifically degrades the RNA of RNA-DNA hybrids. The polypeptide is Ribonuclease HII (Haemophilus influenzae (strain PittGG)).